The following is a 347-amino-acid chain: UDP-N-acetylenolpyruvoylglucosamine reductase (347 aa).

The region spanning 23–197 (LPARAARLLR…LRVRFRLPQA (175 aa)) is the FAD-binding PCMH-type domain. Arginine 174 is a catalytic residue. The active-site Proton donor is serine 247. Residue glutamate 343 is part of the active site.

Belongs to the MurB family. The cofactor is FAD.

The protein resides in the cytoplasm. The enzyme catalyses UDP-N-acetyl-alpha-D-muramate + NADP(+) = UDP-N-acetyl-3-O-(1-carboxyvinyl)-alpha-D-glucosamine + NADPH + H(+). The protein operates within cell wall biogenesis; peptidoglycan biosynthesis. Its function is as follows. Cell wall formation. This Azoarcus sp. (strain BH72) protein is UDP-N-acetylenolpyruvoylglucosamine reductase.